The chain runs to 516 residues: GTPase Obg (516 aa).

Positions 4 to 161 constitute an Obg domain; that stretch reads PTFVDRVTLH…LEIVLELKVV (158 aa). The OBG-type G domain maps to 162–332; the sequence is ADIGLVGFPS…LTFAMAGIVE (171 aa). Residues 168–175, 193–197, 214–217, 284–287, and 313–315 contribute to the GTP site; these read GFPSAGKS, FTTLV, DVPG, NKVD, and SAA. Residues serine 175 and threonine 195 each coordinate Mg(2+). Residues 351-432 enclose the OCT domain; the sequence is PSVDGSDAFT…ENAVVFDFKP (82 aa). A compositionally biased stretch (basic and acidic residues) spans 466–491; that stretch reads AMADRAEGETRADVARRLDRPAREDG. Positions 466-516 are disordered; that stretch reads AMADRAEGETRADVARRLDRPAREDGGAYGPQSYEIGGRDDPDWAEEDLGE.

It belongs to the TRAFAC class OBG-HflX-like GTPase superfamily. OBG GTPase family. In terms of assembly, monomer. Requires Mg(2+) as cofactor.

The protein resides in the cytoplasm. Functionally, an essential GTPase which binds GTP, GDP and possibly (p)ppGpp with moderate affinity, with high nucleotide exchange rates and a fairly low GTP hydrolysis rate. Plays a role in control of the cell cycle, stress response, ribosome biogenesis and in those bacteria that undergo differentiation, in morphogenesis control. In Nocardioides sp. (strain ATCC BAA-499 / JS614), this protein is GTPase Obg.